Consider the following 279-residue polypeptide: Movement protein (279 aa).

The segment at 246 to 279 (SESEDLNVESPPAAIGSSSASRSEAFRPQVVNGL) is disordered. Positions 254–268 (ESPPAAIGSSSASRS) are enriched in low complexity.

Belongs to the cucumovirus movement protein family.

It localises to the host cell junction. The protein localises to the host plasmodesma. Its function is as follows. Transports viral genome to neighboring plant cells directly through plasmosdesmata, without any budding. The movement protein allows efficient cell to cell propagation, by bypassing the host cell wall barrier. Acts by forming a tubular structure at the host plasmodesmata, enlarging it enough to allow free passage of virion capsids. This is Movement protein from Cucurbita pepo (Vegetable marrow).